The sequence spans 210 residues: Urease accessory protein UreF (210 aa).

The protein belongs to the UreF family. UreD, UreF and UreG form a complex that acts as a GTP-hydrolysis-dependent molecular chaperone, activating the urease apoprotein by helping to assemble the nickel containing metallocenter of UreC. The UreE protein probably delivers the nickel.

It is found in the cytoplasm. Required for maturation of urease via the functional incorporation of the urease nickel metallocenter. The polypeptide is Urease accessory protein UreF (Cereibacter sphaeroides (strain KD131 / KCTC 12085) (Rhodobacter sphaeroides)).